A 298-amino-acid chain; its full sequence is MAPSQLPPMFNPTPQDIEMLLAAQCHLGSKNLQVHMEPYLWKTRPDGVNVINIGKTWEKILLAARIIAAIDNPADICVISARPYGQRAVLKFASHTGATAIAGRFTPGNFTNYITRSFKEPRLIIVTDPRTDAQAIKEASYVNIPVIALCDTDSPTDFVDVAIPTNNKGRHAIGLVWWLLAREVLRLRGTLANRETEWDVVVDLYFYRDPEAEENKEIAEETKVPGAEEIGAGAVESGFAGENWDTQAPGAGVPGSAFAAASAAAATSWEADGGDWAASSAPPAGESWAETQPTEAKW.

Residues 240–298 (AGENWDTQAPGAGVPGSAFAAASAAAATSWEADGGDWAASSAPPAGESWAETQPTEAKW) are disordered. Positions 248-271 (APGAGVPGSAFAAASAAAATSWEA) are enriched in low complexity. Positions 289–298 (AETQPTEAKW) are enriched in polar residues.

It belongs to the universal ribosomal protein uS2 family. In terms of assembly, component of the small ribosomal subunit. Mature ribosomes consist of a small (40S) and a large (60S) subunit. The 40S subunit contains about 33 different proteins and 1 molecule of RNA (18S). The 60S subunit contains about 49 different proteins and 3 molecules of RNA (25S, 5.8S and 5S). Interacts with rps21.

It is found in the cytoplasm. In terms of biological role, required for the assembly and/or stability of the 40S ribosomal subunit. Required for the processing of the 20S rRNA-precursor to mature 18S rRNA in a late step of the maturation of 40S ribosomal subunits. The sequence is that of Small ribosomal subunit protein uS2 (rps0) from Aspergillus clavatus (strain ATCC 1007 / CBS 513.65 / DSM 816 / NCTC 3887 / NRRL 1 / QM 1276 / 107).